An 80-amino-acid polypeptide reads, in one-letter code: Acyl carrier protein (80 aa).

The Carrier domain maps to 1–76 (MTLEEKIIEI…DVIDYLKVRN (76 aa)). At serine 36 the chain carries O-(pantetheine 4'-phosphoryl)serine.

It belongs to the acyl carrier protein (ACP) family. In terms of processing, 4'-phosphopantetheine is transferred from CoA to a specific serine of apo-ACP by AcpS. This modification is essential for activity because fatty acids are bound in thioester linkage to the sulfhydryl of the prosthetic group.

It is found in the cytoplasm. Its pathway is lipid metabolism; fatty acid biosynthesis. In terms of biological role, carrier of the growing fatty acid chain in fatty acid biosynthesis. The polypeptide is Acyl carrier protein (Syntrophus aciditrophicus (strain SB)).